The chain runs to 195 residues: HTH-type transcriptional regulator BetI (195 aa).

One can recognise an HTH tetR-type domain in the interval 8 to 68 (SIRRRQLIDA…ATMRDITSQL (61 aa)). Residues 31 to 50 (TIAQIARRAGVSTGIISHYF) constitute a DNA-binding region (H-T-H motif).

It participates in amine and polyamine biosynthesis; betaine biosynthesis via choline pathway [regulation]. In terms of biological role, repressor involved in the biosynthesis of the osmoprotectant glycine betaine. It represses transcription of the choline transporter BetT and the genes of BetAB involved in the synthesis of glycine betaine. The chain is HTH-type transcriptional regulator BetI from Escherichia coli (strain SMS-3-5 / SECEC).